A 100-amino-acid chain; its full sequence is NADH-quinone oxidoreductase subunit K (100 aa).

The next 3 membrane-spanning stretches (helical) occupy residues 4–24, 28–48, and 60–80; these read LQHGLILAAILFVLGLTGLII, LLFMLISLEVMINAAALAFVV, and VMYILAITLAAAEASIGLALL.

It belongs to the complex I subunit 4L family. NDH-1 is composed of 13 different subunits. Subunits NuoA, H, J, K, L, M, N constitute the membrane sector of the complex.

The protein resides in the cell inner membrane. The enzyme catalyses a quinone + NADH + 5 H(+)(in) = a quinol + NAD(+) + 4 H(+)(out). Functionally, NDH-1 shuttles electrons from NADH, via FMN and iron-sulfur (Fe-S) centers, to quinones in the respiratory chain. The immediate electron acceptor for the enzyme in this species is believed to be ubiquinone. Couples the redox reaction to proton translocation (for every two electrons transferred, four hydrogen ions are translocated across the cytoplasmic membrane), and thus conserves the redox energy in a proton gradient. The polypeptide is NADH-quinone oxidoreductase subunit K (Yersinia enterocolitica serotype O:8 / biotype 1B (strain NCTC 13174 / 8081)).